Consider the following 375-residue polypeptide: Tyrosine--tRNA ligase (375 aa).

Residues Tyr37, Tyr168, Gln172, Asp175, and Gln190 each coordinate L-tyrosine. A 'KMSKS' region motif is present at residues 251 to 255 (KMSKS). Lys254 is an ATP binding site.

The protein belongs to the class-I aminoacyl-tRNA synthetase family. TyrS type 4 subfamily. In terms of assembly, homodimer.

Its subcellular location is the cytoplasm. The enzyme catalyses tRNA(Tyr) + L-tyrosine + ATP = L-tyrosyl-tRNA(Tyr) + AMP + diphosphate + H(+). In terms of biological role, catalyzes the attachment of tyrosine to tRNA(Tyr) in a two-step reaction: tyrosine is first activated by ATP to form Tyr-AMP and then transferred to the acceptor end of tRNA(Tyr). This chain is Tyrosine--tRNA ligase, found in Pyrococcus horikoshii (strain ATCC 700860 / DSM 12428 / JCM 9974 / NBRC 100139 / OT-3).